The primary structure comprises 212 residues: Ribosomal RNA large subunit methyltransferase E (212 aa).

S-adenosyl-L-methionine is bound by residues Gly57, Trp59, Asp77, Asp93, and Asp122. The active-site Proton acceptor is Lys162.

The protein belongs to the class I-like SAM-binding methyltransferase superfamily. RNA methyltransferase RlmE family.

The protein resides in the cytoplasm. It carries out the reaction uridine(2552) in 23S rRNA + S-adenosyl-L-methionine = 2'-O-methyluridine(2552) in 23S rRNA + S-adenosyl-L-homocysteine + H(+). In terms of biological role, specifically methylates the uridine in position 2552 of 23S rRNA at the 2'-O position of the ribose in the fully assembled 50S ribosomal subunit. The chain is Ribosomal RNA large subunit methyltransferase E from Coxiella burnetii (strain CbuK_Q154) (Coxiella burnetii (strain Q154)).